Reading from the N-terminus, the 806-residue chain is Exonuclease 1 (806 aa).

Residues 1 to 99 (MGIQGLLQFI…KSRRERRQAN (99 aa)) form an N-domain region. The Mg(2+) site is built by D30, D78, E150, D152, D171, D173, and D225. Residues 138–229 (RTRGVDCVVA…ILSGCDYLQS (92 aa)) form an I-domain region. Disordered stretches follow at residues 337–426 (RIDD…EDTS), 443–475 (HCPE…PFRP), and 512–754 (ETQE…SPGL). The segment covering 355–378 (RSSSWNDRCDKTATTQASIWSQNY) has biased composition (polar residues). A compositionally biased stretch (basic and acidic residues) spans 412 to 425 (PQRESQVKRPREDT). 3 stretches are compositionally biased toward polar residues: residues 447–458 (TQPTTKPLTNDN), 533–542 (SQSGGDTSSL), and 578–589 (WSGTTKELNKSV). Positions 592–601 (PARDSTERQR) are enriched in basic and acidic residues. Polar residues predominate over residues 602–615 (SSSTPSGLSTLQQF). A compositionally biased stretch (low complexity) spans 651–670 (SQDSAYFSQSSSISASVENS). Positions 676–685 (NSDKEKERDS) are enriched in basic and acidic residues. The segment covering 686–696 (VVSNSPSSSPL) has biased composition (low complexity). The segment covering 744–754 (KNVNNENSPGL) has biased composition (polar residues).

It belongs to the XPG/RAD2 endonuclease family. EXO1 subfamily. Requires Mg(2+) as cofactor.

The protein resides in the nucleus. Functionally, 5'-&gt;3' double-stranded DNA exonuclease which may also contain a cryptic 3'-&gt;5' double-stranded DNA exonuclease activity. Also exhibits endonuclease activity against 5'-overhanging flap structures similar to those generated by displacement synthesis when DNA polymerase encounters the 5'-end of a downstream Okazaki fragment. Required for DNA mismatch repair (MMR). The polypeptide is Exonuclease 1 (exo1) (Danio rerio (Zebrafish)).